The following is a 799-amino-acid chain: Ribonucleoside-diphosphate reductase large subunit (799 aa).

Substrate contacts are provided by residues threonine 192, 207-208 (SC), glycine 238, 408-412 (NLCAE), and 612-616 (PTAGT). A disulfide bond links cysteine 208 and cysteine 424. Catalysis depends on asparagine 408, which acts as the Proton acceptor. Cysteine 410 functions as the Cysteine radical intermediate in the catalytic mechanism. Glutamate 412 acts as the Proton acceptor in catalysis. The segment at 765-799 (PDSGDGVGGYKGGDEEPRSPEHAQCESPDRCLSCQ) is disordered. A compositionally biased stretch (basic and acidic residues) spans 776–793 (GGDEEPRSPEHAQCESPD).

This sequence belongs to the ribonucleoside diphosphate reductase large chain family. In terms of assembly, heterotetramer composed of a homodimer of the large subunit (R1) and a homodimer of the small subunit (R2). Larger multisubunit protein complex are also active, composed of (R1)n(R2)n.

The catalysed reaction is a 2'-deoxyribonucleoside 5'-diphosphate + [thioredoxin]-disulfide + H2O = a ribonucleoside 5'-diphosphate + [thioredoxin]-dithiol. Ribonucleoside-diphosphate reductase holoenzyme provides the precursors necessary for viral DNA synthesis. Allows virus growth in non-dividing cells, as well as reactivation from latency in infected hosts. Catalyzes the biosynthesis of deoxyribonucleotides from the corresponding ribonucleotides. In Equine herpesvirus 2 (strain 86/87) (EHV-2), this protein is Ribonucleoside-diphosphate reductase large subunit.